We begin with the raw amino-acid sequence, 978 residues long: Rab3 GTPase-activating protein catalytic subunit (978 aa).

Disordered regions lie at residues 533 to 554 (EGKKGNPLYSSSESSVNKTASD), 586 to 621 (HSDTEELKESGQESARKAKEETKENPSPKPEGRLHQ), and 908 to 936 (EEEPKRSSSSDDRRQTSGTDFPSPAGREL). The span at 540 to 554 (LYSSSESSVNKTASD) shows a compositional bias: polar residues. Basic and acidic residues-rich tracts occupy residues 586-619 (HSDTEELKESGQESARKAKEETKENPSPKPEGRL) and 909-922 (EEPKRSSSSDDRRQ).

Belongs to the Rab3-GAP catalytic subunit family. As to quaternary structure, the Rab3 GTPase-activating complex is a heterodimer composed of rab3gap1 and rab3gap2. The Rab3 GTPase-activating complex interacts with DMXL2. Interacts with LMAN1.

It localises to the cytoplasm. Its subcellular location is the endoplasmic reticulum. The protein resides in the golgi apparatus. It is found in the cis-Golgi network. Functionally, catalytic subunit of the Rab3 GTPase-activating (Rab3GAP) complex composed of rab3gap1 and rab3gap2, which has GTPase-activating protein (GAP) activity towards various Rab3 subfamily members (RAB3A, RAB3B, RAB3C and RAB3D), RAB5A and RAB43, and guanine nucleotide exchange factor (GEF) activity towards RAB18. As part of the Rab3GAP complex, acts as a GAP for Rab3 proteins by converting active RAB3-GTP to the inactive form RAB3-GDP. Rab3 proteins are involved in regulated exocytosis of neurotransmitters and hormones. The Rab3GAP complex, acts as a GEF for RAB18 by promoting the conversion of inactive RAB18-GDP to the active form RAB18-GTP. Recruits and stabilizes RAB18 at the cis-Golgi membrane where RAB18 is most likely activated. Also involved in RAB18 recruitment at the endoplasmic reticulum (ER) membrane where it maintains proper ER structure. Required for normal eye and brain development. May participate in neurodevelopmental processes such as proliferation, migration and differentiation before synapse formation, and non-synaptic vesicular release of neurotransmitters. This chain is Rab3 GTPase-activating protein catalytic subunit (rab3gap1), found in Xenopus laevis (African clawed frog).